The following is a 624-amino-acid chain: Chaperone protein HtpG (624 aa).

The tract at residues 1 to 336 is a; substrate-binding; it reads MKGQETRGFQ…SNDLPLNVSR (336 aa). A b region spans residues 337-552; sequence EILQDSSITR…NDEMSTQMAK (216 aa). The interval 553-624 is c; that stretch reads LFAAAGQAVP…IRRMNQLLVS (72 aa).

This sequence belongs to the heat shock protein 90 family. Homodimer.

The protein localises to the cytoplasm. In terms of biological role, molecular chaperone. Has ATPase activity. The chain is Chaperone protein HtpG from Cronobacter sakazakii (strain ATCC BAA-894) (Enterobacter sakazakii).